The following is a 462-amino-acid chain: Ketoisovalerate reductase (462 aa).

The disordered stretch occupies residues 34-55 (PTAVKPDRADRGDFDPGKYPVD). The segment covering 38 to 49 (KPDRADRGDFDP) has biased composition (basic and acidic residues). 72-77 (GPGNVG) lines the NADP(+) pocket. A Calmoduling-binding motif is present at residues 167–184 (ADRLRRYLGRCSSVVFAQ). The active-site Proton donor is the K290. Positions 294, 298, and 403 each coordinate substrate. E415 lines the NADP(+) pocket.

This sequence belongs to the ketopantoate reductase family. As to quaternary structure, homodimer. Binds to calmodulin in a calcium-independent manner.

The catalysed reaction is (R)-2-hydroxy-3-methylbutanoate + NADP(+) = 3-methyl-2-oxobutanoate + NADPH + H(+). Its activity is regulated as follows. Environmental stimuli such as light and salt stress suppress activity through stimulation of calmodulin (CaM) that binds BEA2 and probably impairs its dimerization. Its function is as follows. Ketoisovalerate reductase; part of the gene cluster that mediates the biosynthesis of beauvericin (BEA), a non-ribosomal cyclic hexadepsipeptide that shows antibiotic, antifungal, insecticidal, and cancer cell antiproliferative and antihaptotactic activity. Ketoisovalerate reductase BEA2 catalyzes the NADPH-specific reduction of ketoisovaleric acid to hydroxyisovalerate, a precursor for beauvericin biosynthesis. The nonribosomal cyclodepsipeptide synthetase BEA1 then catalyzes the formation of beauvericin via condensation and cyclization of 3 dipeptidol monomers, each composed of one unit of hydroxyisovalerate and one unit of N-methyl-phenylalanine. The polypeptide is Ketoisovalerate reductase (Beauveria bassiana (White muscardine disease fungus)).